The primary structure comprises 620 residues: 1-deoxy-D-xylulose-5-phosphate synthase (620 aa).

Thiamine diphosphate contacts are provided by residues His-80 and Gly-121–Ser-123. Asp-152 contributes to the Mg(2+) binding site. Thiamine diphosphate contacts are provided by residues Gly-153–Ala-154, Asn-181, Tyr-288, and Glu-370. A Mg(2+)-binding site is contributed by Asn-181.

It belongs to the transketolase family. DXPS subfamily. In terms of assembly, homodimer. Mg(2+) serves as cofactor. The cofactor is thiamine diphosphate.

It carries out the reaction D-glyceraldehyde 3-phosphate + pyruvate + H(+) = 1-deoxy-D-xylulose 5-phosphate + CO2. The protein operates within metabolic intermediate biosynthesis; 1-deoxy-D-xylulose 5-phosphate biosynthesis; 1-deoxy-D-xylulose 5-phosphate from D-glyceraldehyde 3-phosphate and pyruvate: step 1/1. Catalyzes the acyloin condensation reaction between C atoms 2 and 3 of pyruvate and glyceraldehyde 3-phosphate to yield 1-deoxy-D-xylulose-5-phosphate (DXP). The polypeptide is 1-deoxy-D-xylulose-5-phosphate synthase (Shigella flexneri).